The primary structure comprises 227 residues: Translation initiation factor 6 (227 aa).

It belongs to the eIF-6 family.

Binds to the 50S ribosomal subunit and prevents its association with the 30S ribosomal subunit to form the 70S initiation complex. The protein is Translation initiation factor 6 of Staphylothermus marinus (strain ATCC 43588 / DSM 3639 / JCM 9404 / F1).